Here is a 636-residue protein sequence, read N- to C-terminus: Chaperone protein DnaK (636 aa).

A Phosphothreonine; by autocatalysis modification is found at threonine 198. Over residues 602–613 the composition is skewed to low complexity; sequence QPAGEEQAGAAA. The segment at 602–636 is disordered; sequence QPAGEEQAGAAAHEGEAKGEKVVDADFEEVKEDKK. A compositionally biased stretch (basic and acidic residues) spans 614 to 625; it reads HEGEAKGEKVVD. The span at 626 to 636 shows a compositional bias: acidic residues; the sequence is ADFEEVKEDKK.

It belongs to the heat shock protein 70 family.

In terms of biological role, acts as a chaperone. In Geotalea daltonii (strain DSM 22248 / JCM 15807 / FRC-32) (Geobacter daltonii), this protein is Chaperone protein DnaK.